Reading from the N-terminus, the 121-residue chain is Large ribosomal subunit protein uL22 (121 aa).

This sequence belongs to the universal ribosomal protein uL22 family. As to quaternary structure, part of the 50S ribosomal subunit.

Functionally, this protein binds specifically to 23S rRNA; its binding is stimulated by other ribosomal proteins, e.g. L4, L17, and L20. It is important during the early stages of 50S assembly. It makes multiple contacts with different domains of the 23S rRNA in the assembled 50S subunit and ribosome. Its function is as follows. The globular domain of the protein is located near the polypeptide exit tunnel on the outside of the subunit, while an extended beta-hairpin is found that lines the wall of the exit tunnel in the center of the 70S ribosome. In Synechococcus sp. (strain WH7803), this protein is Large ribosomal subunit protein uL22.